The primary structure comprises 336 residues: Phosphate acyltransferase (336 aa).

The protein belongs to the PlsX family. Homodimer. Probably interacts with PlsY.

The protein resides in the cytoplasm. The enzyme catalyses a fatty acyl-[ACP] + phosphate = an acyl phosphate + holo-[ACP]. The protein operates within lipid metabolism; phospholipid metabolism. Catalyzes the reversible formation of acyl-phosphate (acyl-PO(4)) from acyl-[acyl-carrier-protein] (acyl-ACP). This enzyme utilizes acyl-ACP as fatty acyl donor, but not acyl-CoA. This is Phosphate acyltransferase from Dictyoglomus thermophilum (strain ATCC 35947 / DSM 3960 / H-6-12).